A 313-amino-acid chain; its full sequence is Protein FixB (313 aa).

255 to 283 lines the FAD pocket; that stretch reads LYLAVGISGQIQHMVGANASQTIFAINKD.

The protein belongs to the ETF alpha-subunit/FixB family. In terms of assembly, heterodimer of FixA and FixB.

The protein operates within amine and polyamine metabolism; carnitine metabolism. In terms of biological role, required for anaerobic carnitine reduction. May bring reductant to CaiA. The chain is Protein FixB from Escherichia coli O127:H6 (strain E2348/69 / EPEC).